Reading from the N-terminus, the 271-residue chain is Formamidopyrimidine-DNA glycosylase (271 aa).

Pro-2 (schiff-base intermediate with DNA) is an active-site residue. Glu-3 (proton donor) is an active-site residue. Lys-58 acts as the Proton donor; for beta-elimination activity in catalysis. His-91, Arg-110, and Arg-152 together coordinate DNA. The FPG-type zinc-finger motif lies at 237-271 (QIYGRSAHPCPICGTPIRLERIGQRASYYCTQCQH). Arg-261 serves as the catalytic Proton donor; for delta-elimination activity.

It belongs to the FPG family. As to quaternary structure, monomer. It depends on Zn(2+) as a cofactor.

The catalysed reaction is Hydrolysis of DNA containing ring-opened 7-methylguanine residues, releasing 2,6-diamino-4-hydroxy-5-(N-methyl)formamidopyrimidine.. It catalyses the reaction 2'-deoxyribonucleotide-(2'-deoxyribose 5'-phosphate)-2'-deoxyribonucleotide-DNA = a 3'-end 2'-deoxyribonucleotide-(2,3-dehydro-2,3-deoxyribose 5'-phosphate)-DNA + a 5'-end 5'-phospho-2'-deoxyribonucleoside-DNA + H(+). Functionally, involved in base excision repair of DNA damaged by oxidation or by mutagenic agents. Acts as a DNA glycosylase that recognizes and removes damaged bases. Has a preference for oxidized purines, such as 7,8-dihydro-8-oxoguanine (8-oxoG). Has AP (apurinic/apyrimidinic) lyase activity and introduces nicks in the DNA strand. Cleaves the DNA backbone by beta-delta elimination to generate a single-strand break at the site of the removed base with both 3'- and 5'-phosphates. The polypeptide is Formamidopyrimidine-DNA glycosylase (Nitrosococcus oceani (strain ATCC 19707 / BCRC 17464 / JCM 30415 / NCIMB 11848 / C-107)).